A 361-amino-acid polypeptide reads, in one-letter code: Mitogen-activated protein kinase 14A (361 aa).

In terms of domain architecture, Protein kinase spans 25–309; it reads YQNLSPVGSG…AAEALAHPYF (285 aa). Residues 31–39 and K54 each bind ATP; that span reads VGSGAYGSV. D169 acts as the Proton acceptor in catalysis. T181 bears the Phosphothreonine; by MAP2K3 mark. The TXY signature appears at 181–183; sequence TGY. Position 183 is a phosphotyrosine; by MAP2K3 (Y183).

It belongs to the protein kinase superfamily. CMGC Ser/Thr protein kinase family. MAP kinase subfamily. The cofactor is Mg(2+). Post-translationally, dually phosphorylated on Thr-181 and Tyr-183, which activates the enzyme.

It localises to the cytoplasm. The protein resides in the nucleus. The enzyme catalyses L-seryl-[protein] + ATP = O-phospho-L-seryl-[protein] + ADP + H(+). It carries out the reaction L-threonyl-[protein] + ATP = O-phospho-L-threonyl-[protein] + ADP + H(+). With respect to regulation, activated by threonine and tyrosine phosphorylation by the dual specificity kinase, MKK3. Its function is as follows. Serine/threonine kinase which acts as an essential component of the MAP kinase signal transduction pathway. Mapk14a is one of the four p38 MAPKs which play an important role in the cascades of cellular responses evoked by extracellular stimuli such as pro-inflammatory cytokines or physical stress leading to direct activation of transcription factors. Accordingly, p38 MAPKs phosphorylate a broad range of proteins and it has been estimated that they may have approximately 200 to 300 substrates each. Some of the targets are downstream kinases which are activated through phosphorylation and further phosphorylate additional targets. Required for cytokinesis on the future dorsal side of the blastodisc, suggesting a role in symmetrical and synchronous blastomere cleavage. The polypeptide is Mitogen-activated protein kinase 14A (mapk14a) (Danio rerio (Zebrafish)).